A 114-amino-acid polypeptide reads, in one-letter code: Putative movement protein (114 aa).

The helical transmembrane segment at 27-47 (LIGIILLVTVCLIVLWVCIML) threads the bilayer. Positions 79 to 114 (RTPFEATGPERERNWDARRQSTTVNPASQPNTGSVF) are disordered. A compositionally biased stretch (basic and acidic residues) spans 86–97 (GPERERNWDARR). The segment covering 98-114 (QSTTVNPASQPNTGSVF) has biased composition (polar residues).

Belongs to the nanovirus movement protein family.

The protein resides in the host cell membrane. Its function is as follows. May transport viral genome to neighboring plant cells directly through plasmosdesmata, without any budding. The movement protein allows efficient cell to cell propagation, by bypassing the host cell wall barrier. The protein is Putative movement protein (DNA-M) of Faba bean necrotic yellows virus (isolate Syrian SV292-88) (FBNYV).